We begin with the raw amino-acid sequence, 78 residues long: Defensin beta 136 (78 aa).

A signal peptide spans 1-21 (MNLCLSSLLFFLVILLPSGKG). Cystine bridges form between cysteine 33/cysteine 60, cysteine 40/cysteine 54, and cysteine 44/cysteine 61.

It belongs to the beta-defensin family.

The protein resides in the secreted. Its function is as follows. Host defense peptide that exhibits antimicrobial and antifungal activity. Exhibits antimicrobial activity against E.coli, S.aureus and C.albicans (in vitro). Has high lipopolysaccharide (LPS)-binding affinity, and may thereby be involved in immunoregulation through LPS neutralization. The protein is Defensin beta 136 (DEFB136) of Pan troglodytes (Chimpanzee).